A 61-amino-acid polypeptide reads, in one-letter code: Small ribosomal subunit protein eS31 (61 aa).

Cys22, Cys25, Cys38, and Cys41 together coordinate Zn(2+). A C4-type zinc finger spans residues 22-41 (CPRCGSFMAEHKDRYHCGKC).

It belongs to the eukaryotic ribosomal protein eS31 family. As to quaternary structure, part of the 30S ribosomal subunit. Zn(2+) is required as a cofactor.

The sequence is that of Small ribosomal subunit protein eS31 from Nanoarchaeum equitans (strain Kin4-M).